Here is a 396-residue protein sequence, read N- to C-terminus: MSRSEEIIEVTNHYGAQNYVPLPIVISEAEGVWVKDPEGNKYMDMLSAYSAVNQGHRHPKIIQALKEQADKVTLVSRAFHSENLGEWYEKICKLSGKAKALPMNTGAEAVETALKAARRWAYDVKNIQPDKAEIIAFNGNFHGRTMAPVSLSSEPEYQRGYGPLLDGFRKVDFGDIEAVKAAINENTAAILIEPIQGEAGINVPPEGYLKQIRELCDEHNVLFIADEIQAGLGRSGKLFATDWDNVKPDVYILGKALGGGVLPISVVLADEEVLGVFTPGSHGSTFGGNPLACAVSNAALDVIIDEDLPGRSLELGDYFKSELEKIDHPAIKEVRGRGLFIGIELNEAARPFCESLKEQGLLCKETHDTVIRFAPPLIISKEELDFALDKVRSVFE.

An N6-(pyridoxal phosphate)lysine modification is found at lysine 255.

The protein belongs to the class-III pyridoxal-phosphate-dependent aminotransferase family. OAT subfamily. Pyridoxal 5'-phosphate serves as cofactor.

It is found in the cytoplasm. It catalyses the reaction a 2-oxocarboxylate + L-ornithine = L-glutamate 5-semialdehyde + an L-alpha-amino acid. Its pathway is amino-acid biosynthesis; L-proline biosynthesis; L-glutamate 5-semialdehyde from L-ornithine: step 1/1. In terms of biological role, catalyzes the interconversion of ornithine to glutamate semialdehyde. The protein is Ornithine aminotransferase 2 of Staphylococcus saprophyticus subsp. saprophyticus (strain ATCC 15305 / DSM 20229 / NCIMB 8711 / NCTC 7292 / S-41).